Reading from the N-terminus, the 300-residue chain is 33 kDa chaperonin (300 aa).

Disulfide bonds link Cys247–Cys249 and Cys280–Cys283.

This sequence belongs to the HSP33 family. Under oxidizing conditions two disulfide bonds are formed involving the reactive cysteines. Under reducing conditions zinc is bound to the reactive cysteines and the protein is inactive.

Its subcellular location is the cytoplasm. In terms of biological role, redox regulated molecular chaperone. Protects both thermally unfolding and oxidatively damaged proteins from irreversible aggregation. Plays an important role in the bacterial defense system toward oxidative stress. The protein is 33 kDa chaperonin of Prochlorococcus marinus (strain MIT 9515).